A 342-amino-acid chain; its full sequence is Oxygen-dependent coproporphyrinogen-III oxidase (342 aa).

Substrate is bound at residue S98. H102 and H112 together coordinate a divalent metal cation. The Proton donor role is filled by H112. Residue 114 to 116 (NYR) coordinates substrate. 2 residues coordinate a divalent metal cation: H146 and H176. The important for dimerization stretch occupies residues 266–301 (YVEFNLVWDRGTIFGLQTNGRTESILMSLPPLARWE).

Belongs to the aerobic coproporphyrinogen-III oxidase family. In terms of assembly, homodimer. The cofactor is a divalent metal cation.

It localises to the cytoplasm. It catalyses the reaction coproporphyrinogen III + O2 + 2 H(+) = protoporphyrinogen IX + 2 CO2 + 2 H2O. It functions in the pathway porphyrin-containing compound metabolism; protoporphyrin-IX biosynthesis; protoporphyrinogen-IX from coproporphyrinogen-III (O2 route): step 1/1. Its function is as follows. Involved in the heme and chlorophyll biosynthesis. Catalyzes the aerobic oxidative decarboxylation of propionate groups of rings A and B of coproporphyrinogen-III to yield the vinyl groups in protoporphyrinogen-IX. In Prochlorococcus marinus (strain MIT 9312), this protein is Oxygen-dependent coproporphyrinogen-III oxidase.